A 167-amino-acid chain; its full sequence is Protein FimG (167 aa).

An N-terminal signal peptide occupies residues 1 to 23 (MKWCKRGYVLAAILALASATIQA). Cysteine 39 and cysteine 77 are disulfide-bonded.

Belongs to the fimbrial protein family.

Its subcellular location is the fimbrium. Its function is as follows. Involved in regulation of length and mediation of adhesion of type 1 fimbriae (but not necessary for the production of fimbriae). Involved in the integration of FimH in the fimbriae. In Escherichia coli (strain K12), this protein is Protein FimG (fimG).